The sequence spans 370 residues: Peptide chain release factor 1 (370 aa).

An N5-methylglutamine modification is found at Gln237. Residues 286–296 are compositionally biased toward basic and acidic residues; that stretch reads ERQRSARDATR. A disordered region spans residues 286–310; sequence ERQRSARDATRKSQVGTGDRSEKIR.

It belongs to the prokaryotic/mitochondrial release factor family. Post-translationally, methylated by PrmC. Methylation increases the termination efficiency of RF1.

The protein resides in the cytoplasm. Its function is as follows. Peptide chain release factor 1 directs the termination of translation in response to the peptide chain termination codons UAG and UAA. This is Peptide chain release factor 1 from Anaeromyxobacter dehalogenans (strain 2CP-C).